Here is a 1279-residue protein sequence, read N- to C-terminus: Botulinum-like toxin eBoNT/J (1279 aa).

Residue histidine 225 participates in Zn(2+) binding. Glutamate 226 is an active-site residue. Histidine 229 and glutamate 269 together coordinate Zn(2+). Cysteine 424 and cysteine 438 are oxidised to a cystine. Residues 435–843 (LSSCIEILED…RLTSLPVFNL (409 aa)) form a translocation domain (TD) region. Residues 476–525 (ADTILDSTLSNYDFSKEINFTSTVPIITVEDPLETDEDVPVISEDRTVYV) form a belt; not required for channel formation region. Residues 860 to 1080 (IDIQDSEVLN…EVNRLYWKYF (221 aa)) form an N-terminus of receptor binding domain (N-RBD) region. The segment at 1081 to 1279 (EGSYLRDVWG…IPVDEGWKED (199 aa)) is C-terminus of receptor binding domain (C-RBD). A Host ganglioside-binding motif motif is present at residues 1250 to 1253 (SAWY).

Belongs to the peptidase M27 family. As to quaternary structure, might be a disulfide-linked heterodimer of a light chain (LC) and heavy chain (HC). Zn(2+) is required as a cofactor.

It localises to the secreted. The protein resides in the host cytoplasm. It is found in the host cytosol. Its subcellular location is the host cell membrane. The protein localises to the host cytoplasmic vesicle membrane. It catalyses the reaction Limited hydrolysis of proteins of the neuroexocytosis apparatus, synaptobrevins, SNAP25 or syntaxin. No detected action on small molecule substrates.. In terms of biological role, strongly resembles a botulinum-type toxin, with the appropriate domains and residues to have proteolytic function, although its C-terminus (which binds to a eukaryotic host cell) is different enough from clostrial botulinum toxins that it might bind another cell target. Might be a precursor of a toxin that binds to an unknown eukaryotic cell receptor(s), and be taken up into the host cell via the endocytic pathway. When the pH of the putative toxin-containing endosome drops a structural rearrangement occurs so that the N-terminus of the heavy chain forms pores that allows the light chain to translocate into the cytosol. Once in the cytosol the disulfide bond linking the 2 subunits is reduced and light chain cleaves its target protein. This Enterococcus sp. (strain 3G1_DIV0629) protein is Botulinum-like toxin eBoNT/J.